The primary structure comprises 351 residues: Protein Wnt-4 (351 aa).

Positions 1 to 22 (MSPRSCLRSLRLLVFAVFSAAA) are cleaved as a signal peptide. 11 cysteine pairs are disulfide-bonded: C78-C89, C128-C136, C138-C155, C206-C220, C208-C215, C280-C311, C296-C306, C310-C350, C326-C341, C328-C338, and C333-C334. N88 is a glycosylation site (N-linked (GlcNAc...) asparagine). S212 carries the O-palmitoleoyl serine; by PORCN lipid modification. N-linked (GlcNAc...) asparagine glycosylation is present at N297.

It belongs to the Wnt family. In terms of assembly, interacts with PORCN. Interacts with PKD1. Post-translationally, palmitoleoylation is required for efficient binding to frizzled receptors. Depalmitoleoylation leads to Wnt signaling pathway inhibition. In terms of tissue distribution, in adults in lung and brain.

The protein resides in the secreted. The protein localises to the extracellular space. It is found in the extracellular matrix. Its function is as follows. Ligand for members of the frizzled family of seven transmembrane receptors. Plays an important role in the embryonic development of the urogenital tract and the lung. Required for normal mesenchyme to epithelium transition during embryonic kidney development. Required for the formation of early epithelial renal vesicles during kidney development. Required for normal formation of the Mullerian duct in females, and normal levels of oocytes in the ovaries. Required for normal down-regulation of 3 beta-hydroxysteroid dehydrogenase in the ovary. Required for normal lung development and for normal patterning of trachael cartilage rings. The sequence is that of Protein Wnt-4 (Wnt4) from Mus musculus (Mouse).